Reading from the N-terminus, the 217-residue chain is NADPH-dependent 3-demethoxyubiquinone 3-hydroxylase, mitochondrial (217 aa).

The transit peptide at 1 to 23 (MSAAGAIAAASVGRLRTGVRRPF) directs the protein to the mitochondrion. A run of 2 repeats spans residues 48–129 (AVDR…TALL) and 130–217 (GKEG…SERF). The tract at residues 48-217 (AVDRIIRVDH…SAAIYLSERF (170 aa)) is 2 X approximate tandem repeats. Residue Arg51 participates in NADH binding. Glu60, Glu90, His93, Glu142, Glu178, and His181 together coordinate Fe cation. NADH contacts are provided by Tyr212 and Arg216.

The protein belongs to the COQ7 family. In terms of assembly, component of a multi-subunit COQ enzyme complex. Interacts with COQ8B and COQ6. Interacts with COQ9. Fe cation serves as cofactor. Highly expressed in tissues with high energy demand such as heart, muscle, liver, and kidney.

The protein resides in the mitochondrion inner membrane. The enzyme catalyses a 5-methoxy-2-methyl-3-(all-trans-polyprenyl)benzoquinone + NADH + O2 = a 3-demethylubiquinone + NAD(+) + H2O. The protein operates within cofactor biosynthesis; ubiquinone biosynthesis. Functionally, catalyzes the hydroxylation of the 5-methoxy-2-methyl-3-(all-trans-polyprenyl)benzoquinone at the C6 position and participates in the biosynthesis of ubiquinone. Catalyzes the reaction through a substrate-mediated reduction pathway, whereby NADH shuttles electrons to 5-methoxy-2-methyl-3-(all-trans-decaprenyl)benzoquinone, which then transfers the electrons to the two Fe(3+) centers. The binding of 5-methoxy-2-methyl-3-(all-trans-polyprenyl)benzoquinone (DMQn) mediates reduction of the diiron center by nicotinamide adenine dinucleotide (NADH) and initiates oxygen activation for subsequent DMQ hydroxylation. The physiological substrates are 5-methoxy-2-methyl-3-(all-trans-nonaprenyl)benzoquinone (DMQ(9)) and 5-methoxy-2-methyl-3-(all-trans-decaprenyl)benzoquinone (DMQ(10)), however in vitro the enzyme does not have any specificity concerning the length of the polyprenyl tail, and accepts tails of various lengths with similar efficiency. Also has a structural role in the COQ enzyme complex, stabilizing other COQ polypeptides. Involved in lifespan determination in a ubiquinone-independent manner. Plays a role in modulating mitochondrial stress responses, acting in the nucleus, perhaps via regulating gene expression, independent of its characterized mitochondrial function in ubiquinone biosynthesis. The sequence is that of NADPH-dependent 3-demethoxyubiquinone 3-hydroxylase, mitochondrial from Mus musculus (Mouse).